We begin with the raw amino-acid sequence, 71 residues long: Exodeoxyribonuclease 7 small subunit (71 aa).

It belongs to the XseB family. Heterooligomer composed of large and small subunits.

The protein resides in the cytoplasm. The enzyme catalyses Exonucleolytic cleavage in either 5'- to 3'- or 3'- to 5'-direction to yield nucleoside 5'-phosphates.. Functionally, bidirectionally degrades single-stranded DNA into large acid-insoluble oligonucleotides, which are then degraded further into small acid-soluble oligonucleotides. In Streptococcus equi subsp. equi (strain 4047), this protein is Exodeoxyribonuclease 7 small subunit.